The following is a 92-amino-acid chain: uncharacterized protein (92 aa).

This is an uncharacterized protein from Enterobacteria phage T4 (Bacteriophage T4).